Reading from the N-terminus, the 319-residue chain is Acetyl-coenzyme A carboxylase carboxyl transferase subunit alpha (319 aa).

The 258-residue stretch at E35 to E292 folds into the CoA carboxyltransferase C-terminal domain.

Belongs to the AccA family. As to quaternary structure, acetyl-CoA carboxylase is a heterohexamer composed of biotin carboxyl carrier protein (AccB), biotin carboxylase (AccC) and two subunits each of ACCase subunit alpha (AccA) and ACCase subunit beta (AccD).

The protein localises to the cytoplasm. The catalysed reaction is N(6)-carboxybiotinyl-L-lysyl-[protein] + acetyl-CoA = N(6)-biotinyl-L-lysyl-[protein] + malonyl-CoA. It participates in lipid metabolism; malonyl-CoA biosynthesis; malonyl-CoA from acetyl-CoA: step 1/1. Functionally, component of the acetyl coenzyme A carboxylase (ACC) complex. First, biotin carboxylase catalyzes the carboxylation of biotin on its carrier protein (BCCP) and then the CO(2) group is transferred by the carboxyltransferase to acetyl-CoA to form malonyl-CoA. The polypeptide is Acetyl-coenzyme A carboxylase carboxyl transferase subunit alpha (Desulfitobacterium hafniense (strain DSM 10664 / DCB-2)).